The following is a 258-amino-acid chain: Kallikrein-1 (258 aa).

The first 18 residues, 1–18, serve as a signal peptide directing secretion; that stretch reads MWFLVLCLALSLGGTGAA. Residues 19–24 constitute a propeptide, activation peptide; it reads PPIQSR. The Peptidase S1 domain maps to 25–255; it reads IVGGWECSQP…YVKWIEDTIA (231 aa). 5 disulfide bridges follow: Cys31/Cys170, Cys47/Cys63, Cys149/Cys216, Cys181/Cys195, and Cys206/Cys231. The active-site Charge relay system is His62. Ser90 carries O-linked (GalNAc...) serine glycosylation. N-linked (GlcNAc...) asparagine glycosylation occurs at Asn99. Residue Ser101 is glycosylated (O-linked (GalNAc...) serine). The N-linked (GlcNAc...) asparagine glycan is linked to Asn105. Asp117 functions as the Charge relay system in the catalytic mechanism. Residue Asn161 is glycosylated (N-linked (GlcNAc...) asparagine). An O-linked (GalNAc...) serine glycan is attached at Ser163. Ser210 (charge relay system) is an active-site residue.

This sequence belongs to the peptidase S1 family. Kallikrein subfamily.

The catalysed reaction is Preferential cleavage of Arg-|-Xaa bonds in small molecule substrates. Highly selective action to release kallidin (lysyl-bradykinin) from kininogen involves hydrolysis of Met-|-Xaa or Leu-|-Xaa.. In terms of biological role, glandular kallikreins cleave Met-Lys and Arg-Ser bonds in kininogen to release Lys-bradykinin. The protein is Kallikrein-1 (KLK1) of Papio hamadryas (Hamadryas baboon).